A 1499-amino-acid chain; its full sequence is ABC multidrug transporter A-2 (1499 aa).

2 disordered regions span residues 1-66 (MAMQ…IDQE) and 80-107 (QISQKSAGPTNTFLDPSSDPELDPNSDK). Residues 16-30 (ISSSAGQEVASTIRR) are compositionally biased toward polar residues. The segment covering 31-51 (QFTDADADRIVETPLGEKADS) has biased composition (basic and acidic residues). A compositionally biased stretch (polar residues) spans 80 to 94 (QISQKSAGPTNTFLD). The 250-residue stretch at 166-415 (LRSILGCRNR…FIDMGFDCPD (250 aa)) folds into the ABC transporter 1 domain. N339 is a glycosylation site (N-linked (GlcNAc...) asparagine). 5 helical membrane-spanning segments follow: residues 526–546 (MTLATVIGNSIMAFIVSSVFY), 561–581 (LLFFAILLNAFASSLEILTLW), 606–626 (MIVDLPSKFLVSVVFNLILYF), 635–655 (GHFFVFYLFSVTITLTMSNIF), and 669–689 (MVPSSIFMMILVIYTGFTIPV). The N-linked (GlcNAc...) asparagine glycan is linked to N763. The chain crosses the membrane as a helical span at residues 778-798 (GIILGFFFFFLAAYIICSELV). Residues 857–1100 (FHWQDVCYDI…LIKYFENKGS (244 aa)) form the ABC transporter 2 domain. 893–900 (GVTGAGKT) serves as a coordination point for ATP. Helical transmembrane passes span 1193–1213 (YIYSKAATSIIPPLFIGFTFW), 1227–1247 (FAIFMLLVIFPNLVQQMMPYF), 1268–1288 (AFMLASILVELPWNILMAVPA), 1317–1337 (LLILIFMMFTSTFSSMIIAGI), and 1353–1373 (LCLIFNGVLASPSALPGFWIF). The N-linked (GlcNAc...) asparagine glycan is linked to N1414. The helical transmembrane segment at 1466–1486 (GLLFVYIVFNIFAAIFLYWLI) threads the bilayer.

The protein belongs to the ABC transporter superfamily. ABCG family. PDR (TC 3.A.1.205) subfamily.

The protein resides in the cell membrane. It carries out the reaction itraconazole(in) + ATP + H2O = itraconazole(out) + ADP + phosphate + H(+). The catalysed reaction is voriconazole(in) + ATP + H2O = voriconazole(out) + ADP + phosphate + H(+). With respect to regulation, the efflux inhibitor FK506 impairs the transport activity. Functionally, pleiotropic ABC efflux transporter that confers resistance to structurally and functionally unrelated compounds including azoles such as itraconazole, posaconazole, and voriconazole. In Aspergillus fumigatus (strain ATCC MYA-4609 / CBS 101355 / FGSC A1100 / Af293) (Neosartorya fumigata), this protein is ABC multidrug transporter A-2.